The sequence spans 263 residues: Probable septum site-determining protein MinC (263 aa).

Residues 107-159 form a disordered region; that stretch reads LPPSGARERPLDIKDSAPRKPAEEPSPSAGEARPEPAKAEEKPAEPVSRPTKV. Basic and acidic residues-rich tracts occupy residues 112–129 and 138–150; these read ARER…KPAE and ARPE…EKPA.

Belongs to the MinC family. Interacts with MinD and FtsZ.

Its function is as follows. Cell division inhibitor that blocks the formation of polar Z ring septums. Rapidly oscillates between the poles of the cell to destabilize FtsZ filaments that have formed before they mature into polar Z rings. Prevents FtsZ polymerization. The polypeptide is Probable septum site-determining protein MinC (Pseudomonas aeruginosa (strain LESB58)).